Reading from the N-terminus, the 122-residue chain is Large ribosomal subunit protein bL12 (122 aa).

This sequence belongs to the bacterial ribosomal protein bL12 family. In terms of assembly, homodimer. Part of the ribosomal stalk of the 50S ribosomal subunit. Forms a multimeric L10(L12)X complex, where L10 forms an elongated spine to which 2 to 4 L12 dimers bind in a sequential fashion. Binds GTP-bound translation factors.

Its function is as follows. Forms part of the ribosomal stalk which helps the ribosome interact with GTP-bound translation factors. Is thus essential for accurate translation. The chain is Large ribosomal subunit protein bL12 from Mycoplasma mycoides subsp. mycoides SC (strain CCUG 32753 / NCTC 10114 / PG1).